Here is a 230-residue protein sequence, read N- to C-terminus: 2-C-methyl-D-erythritol 4-phosphate cytidylyltransferase (230 aa).

Belongs to the IspD/TarI cytidylyltransferase family. IspD subfamily.

It carries out the reaction 2-C-methyl-D-erythritol 4-phosphate + CTP + H(+) = 4-CDP-2-C-methyl-D-erythritol + diphosphate. It functions in the pathway isoprenoid biosynthesis; isopentenyl diphosphate biosynthesis via DXP pathway; isopentenyl diphosphate from 1-deoxy-D-xylulose 5-phosphate: step 2/6. Catalyzes the formation of 4-diphosphocytidyl-2-C-methyl-D-erythritol from CTP and 2-C-methyl-D-erythritol 4-phosphate (MEP). In Laribacter hongkongensis (strain HLHK9), this protein is 2-C-methyl-D-erythritol 4-phosphate cytidylyltransferase.